We begin with the raw amino-acid sequence, 174 residues long: Large ribosomal subunit protein uL22 (174 aa).

It belongs to the universal ribosomal protein uL22 family. As to quaternary structure, part of the 50S ribosomal subunit.

This protein binds specifically to 23S rRNA. It makes multiple contacts with different domains of the 23S rRNA in the assembled 50S subunit and ribosome. In terms of biological role, the globular domain of the protein is located near the polypeptide exit tunnel on the outside of the subunit, while an extended beta-hairpin is found that lines the wall of the exit tunnel in the center of the 70S ribosome. The protein is Large ribosomal subunit protein uL22 of Nanoarchaeum equitans (strain Kin4-M).